Reading from the N-terminus, the 758-residue chain is Relaxin receptor 1 (758 aa).

The Extracellular portion of the chain corresponds to 1–409 (MTSGPFFFCI…ENLLASIIQR (409 aa)). Residues 26-63 (SCPLGSFPCGNMSRCLPQLLHCNGVDDCGNRADEDHCG) form the LDL-receptor class A domain. 3 cysteine pairs are disulfide-bonded: Cys-27–Cys-40, Cys-34–Cys-53, and Cys-47–Cys-62. A glycan (N-linked (GlcNAc...) asparagine) is linked at Asn-36. 6 residues coordinate Ca(2+): Leu-45, Asn-48, Val-50, Asp-52, Asp-58, and Glu-59. An N-linked (GlcNAc...) asparagine glycan is attached at Asn-127. LRR repeat units lie at residues 127-148 (NVTV…GFRK), 151-172 (ELQK…AFRG), 175-196 (SLTK…VFED), 199-220 (RLEW…TFYG), 223-244 (SLIL…PLCQ), 248-269 (RLHW…TFIS), 272-293 (NLTV…AFTH), 296-317 (KLDE…IFKD), 320-341 (ELSQ…QFDC), and 344-365 (KLKS…MFRP). N-linked (GlcNAc...) asparagine glycans are attached at residues Asn-264 and Asn-272. An N-linked (GlcNAc...) asparagine glycan is attached at Asn-325. An N-linked (GlcNAc...) asparagine glycan is attached at Asn-368. A helical transmembrane segment spans residues 410–430 (VFVWVVSAITCFGNIFVICMR). Topologically, residues 431 to 443 (PYIRSENKLHAMS) are cytoplasmic. A helical membrane pass occupies residues 444-464 (IISLCCADCLMGVYLFVIGAF). Residues 465–486 (DLKFRGEYNKHAQPWMESVHCQ) are Extracellular-facing. Cys-485 and Cys-563 are disulfide-bonded. The helical transmembrane segment at 487–507 (FMGSLAILSTEVSVLLLTFLT) threads the bilayer. Residues 508–527 (LEKYICIVYPFRCLRPRKCR) are Cytoplasmic-facing. A helical transmembrane segment spans residues 528–548 (TITVLIFIWIIGFIVAFAPLG). The Extracellular segment spans residues 549-577 (NKEFFKNYYGTNGVCFPLHSEDTGSTGAQ). The chain crosses the membrane as a helical span at residues 578-598 (IYSVVIFLGINLVAFIIIVFS). The Cytoplasmic segment spans residues 599–629 (YGSMFYSVHQSSVTVTEIQKQVKKEVVLAKR). A helical membrane pass occupies residues 630–650 (FFFIVFTDALCWIPIFILKFL). Residue Ser-651 is a topological domain, extracellular. The chain crosses the membrane as a helical span at residues 652 to 672 (LLQVEIPDSITSWVVIFILPI). At 673–758 (NSALNPIIYT…SQSSRLNSYS (86 aa)) the chain is on the cytoplasmic side.

Belongs to the G-protein coupled receptor 1 family. As to quaternary structure, interacts with C1QTNF8.

The protein resides in the cell membrane. Its function is as follows. Receptor for relaxins. The activity of this receptor is mediated by G proteins leading to stimulation of adenylate cyclase and an increase of cAMP. Binding of the ligand may also activate a tyrosine kinase pathway that inhibits the activity of a phosphodiesterase that degrades cAMP. This chain is Relaxin receptor 1 (Rxfp1), found in Mus musculus (Mouse).